The following is a 247-amino-acid chain: Exosome complex component Rrp4 (247 aa).

The region spanning 70 to 143 (GDTVIGLIED…INPILSIKGK (74 aa)) is the S1 motif domain. The KH domain maps to 149–211 (SSGIVIDIPP…EALVEAIQII (63 aa)).

Belongs to the RRP4 family. Component of the archaeal exosome complex. Forms a trimer of Rrp4 and/or Csl4 subunits. The trimer associates with a hexameric ring-like arrangement composed of 3 Rrp41-Rrp42 heterodimers.

The protein resides in the cytoplasm. Its function is as follows. Non-catalytic component of the exosome, which is a complex involved in RNA degradation. Increases the RNA binding and the efficiency of RNA degradation. Confers strong poly(A) specificity to the exosome. This Sulfurisphaera tokodaii (strain DSM 16993 / JCM 10545 / NBRC 100140 / 7) (Sulfolobus tokodaii) protein is Exosome complex component Rrp4.